Here is a 722-residue protein sequence, read N- to C-terminus: DUF724 domain-containing protein 7 (722 aa).

Residues 424-449 (KTTPKKKLQAMKNQKSSTNDSVGEKV) are disordered. A compositionally biased stretch (polar residues) spans 434 to 444 (MKNQKSSTNDS). Residues 540–720 (VLPFVKKSQL…HEFQAILAAP (181 aa)) enclose the DUF724 domain. Residues 645–712 (CALEELKAVE…DQEVQNVDHE (68 aa)) are a coiled coil.

In terms of assembly, homodimer. Interacts wtih ABAP1, ARIA and LHP1. Interacts with the non-modified histones H1, H2B, H3 and H4. As to expression, expressed in roots, leaves, stems and flowers.

It is found in the nucleus. May act as a link between DNA replication, transcription and chromatin remodeling during flower development. May participate in the repression of LHP1-targeted genes during flower development by direct interaction with LHP1. May be involved in the polar growth of plant cells via transportation of RNAs. This chain is DUF724 domain-containing protein 7, found in Arabidopsis thaliana (Mouse-ear cress).